The primary structure comprises 122 residues: Large ribosomal subunit protein uL18 (122 aa).

A disordered region spans residues 1–24 (MLKKADKNANRLQRHKRVRRKISG). The segment covering 12 to 22 (LQRHKRVRRKI) has biased composition (basic residues).

It belongs to the universal ribosomal protein uL18 family. In terms of assembly, part of the 50S ribosomal subunit; part of the 5S rRNA/L5/L18/L25 subcomplex. Contacts the 5S and 23S rRNAs.

Its function is as follows. This is one of the proteins that bind and probably mediate the attachment of the 5S RNA into the large ribosomal subunit, where it forms part of the central protuberance. The chain is Large ribosomal subunit protein uL18 from Clostridioides difficile (strain 630) (Peptoclostridium difficile).